The following is a 389-amino-acid chain: MLLTLAQWLQNDYSFLRVVNYLTFRAVMANVTALVIGLGFGPWVIRRLTELKIGQAVRTIGPQTHLVKAGTPTMGGVLVLISIAISTLLWCDWGNRFIWVVLLVTLGYGAIGWVDDYRKVVYRDPRGMSSREKFFWQTLIGLVAAVYLAFSVSEASNVRIWSLFLSWIEGGMFADVPYKMNLIVPFFKEVSYPLGVTGFIVLTYLVIVGSSNAVNLTDGLDGLVIMPVVLVGGGLGVFAYVMGNAVYSKYLLFPHIPGAGELLIFCSAMAGAGLAFLWFNAHPARVFMGDVGALALGGALGTVAVIVRQEIVLFVMGGIFVVETLSVMLQVSWFKFTKRRYGEGRRLFRMAPLHHHFELGGWKETQVTVRFWIITMLLVLIGLSSLKLR.

The next 11 helical transmembrane spans lie at Arg-25 to Ile-45, Met-74 to Gly-94, Phe-97 to Tyr-117, Phe-134 to Glu-154, Trp-167 to Phe-187, Val-190 to Ser-210, Gly-222 to Met-242, Ala-259 to Phe-279, Val-286 to Ile-306, Ile-311 to Val-331, and Gln-366 to Leu-386.

The protein belongs to the glycosyltransferase 4 family. MraY subfamily. Mg(2+) serves as cofactor.

The protein resides in the cell inner membrane. It carries out the reaction UDP-N-acetyl-alpha-D-muramoyl-L-alanyl-gamma-D-glutamyl-meso-2,6-diaminopimeloyl-D-alanyl-D-alanine + di-trans,octa-cis-undecaprenyl phosphate = di-trans,octa-cis-undecaprenyl diphospho-N-acetyl-alpha-D-muramoyl-L-alanyl-D-glutamyl-meso-2,6-diaminopimeloyl-D-alanyl-D-alanine + UMP. It functions in the pathway cell wall biogenesis; peptidoglycan biosynthesis. Its function is as follows. Catalyzes the initial step of the lipid cycle reactions in the biosynthesis of the cell wall peptidoglycan: transfers peptidoglycan precursor phospho-MurNAc-pentapeptide from UDP-MurNAc-pentapeptide onto the lipid carrier undecaprenyl phosphate, yielding undecaprenyl-pyrophosphoryl-MurNAc-pentapeptide, known as lipid I. The protein is Phospho-N-acetylmuramoyl-pentapeptide-transferase of Cupriavidus metallidurans (strain ATCC 43123 / DSM 2839 / NBRC 102507 / CH34) (Ralstonia metallidurans).